We begin with the raw amino-acid sequence, 414 residues long: Serine/threonine transporter SstT (414 aa).

The Cytoplasmic portion of the chain corresponds to 2 to 15; the sequence is TTQRSPGLFRRLAH. A helical membrane pass occupies residues 16 to 36; sequence GSLVKQILVGLVLGILLAWIS. At 37 to 45 the chain is on the periplasmic side; sequence KPAAEAVGL. A helical membrane pass occupies residues 46–66; it reads LGTLFVGALKAVAPILVLMLV. Residues 67-83 are Cytoplasmic-facing; sequence MASIANHQHGQKTNIRP. A helical transmembrane segment spans residues 84–104; sequence ILFLYLLGTFSAALAAVVFSF. At 105 to 142 the chain is on the periplasmic side; that stretch reads AFPSTLHLSSSAGDISPPSGIVEVMRGLVMSMVSNPID. The helical transmembrane segment at 143 to 163 threads the bilayer; sequence ALLKGNYIGILVWAIGLGFAL. Over 164-179 the chain is Cytoplasmic; sequence RHGNETTKNLVNDMSN. The chain crosses the membrane as a helical span at residues 180 to 200; that stretch reads AVTFMVKLVIRFAPIGIFGLV. Over 201-217 the chain is Periplasmic; the sequence is SSTLATTGFSTLWGYAQ. A helical membrane pass occupies residues 218–238; it reads LLVVLVGCMLLVALVVNPLLV. Over 239–299 the chain is Cytoplasmic; that stretch reads WWKIRRNPFP…VSIPLGATIN (61 aa). A helical membrane pass occupies residues 300–320; it reads MAGAAITITVLTLAAVNTLGI. The Periplasmic portion of the chain corresponds to 321–331; that stretch reads PVDLPTALLLS. A helical membrane pass occupies residues 332–352; the sequence is VVASLCACGASGVAGGSLLLI. Over 353 to 414 the chain is Cytoplasmic; it reads PLACNMFGIS…DRLANSALRN (62 aa).

It belongs to the dicarboxylate/amino acid:cation symporter (DAACS) (TC 2.A.23) family.

It localises to the cell inner membrane. It catalyses the reaction L-serine(in) + Na(+)(in) = L-serine(out) + Na(+)(out). The enzyme catalyses L-threonine(in) + Na(+)(in) = L-threonine(out) + Na(+)(out). Involved in the import of serine and threonine into the cell, with the concomitant import of sodium (symport system). The chain is Serine/threonine transporter SstT from Shigella flexneri serotype 5b (strain 8401).